The chain runs to 880 residues: Alanine--tRNA ligase (880 aa).

Zn(2+) contacts are provided by H567, H571, C669, and H673.

The protein belongs to the class-II aminoacyl-tRNA synthetase family. Zn(2+) serves as cofactor.

The protein resides in the cytoplasm. It carries out the reaction tRNA(Ala) + L-alanine + ATP = L-alanyl-tRNA(Ala) + AMP + diphosphate. Its function is as follows. Catalyzes the attachment of alanine to tRNA(Ala) in a two-step reaction: alanine is first activated by ATP to form Ala-AMP and then transferred to the acceptor end of tRNA(Ala). Also edits incorrectly charged Ser-tRNA(Ala) and Gly-tRNA(Ala) via its editing domain. The protein is Alanine--tRNA ligase of Bacillus cytotoxicus (strain DSM 22905 / CIP 110041 / 391-98 / NVH 391-98).